The primary structure comprises 304 residues: Cytochrome c biogenesis protein CcsA (304 aa).

The next 8 membrane-spanning stretches (helical) occupy residues leucine 8 to phenylalanine 28, proline 37 to leucine 57, glycine 63 to leucine 83, isoleucine 96 to leucine 116, valine 141 to valine 161, threonine 212 to asparagine 232, threonine 246 to leucine 263, and valine 275 to isoleucine 295.

Belongs to the CcmF/CycK/Ccl1/NrfE/CcsA family. In terms of assembly, may interact with ccs1.

The protein resides in the cellular thylakoid membrane. In terms of biological role, required during biogenesis of c-type cytochromes (cytochrome c6 and cytochrome f) at the step of heme attachment. This chain is Cytochrome c biogenesis protein CcsA, found in Synechococcus sp. (strain CC9902).